The primary structure comprises 388 residues: Mannitol-1-phosphate 5-dehydrogenase (388 aa).

4–15 (AVHFGAGNIGRG) lines the NAD(+) pocket.

The protein belongs to the mannitol dehydrogenase family.

The enzyme catalyses D-mannitol 1-phosphate + NAD(+) = beta-D-fructose 6-phosphate + NADH + H(+). This is Mannitol-1-phosphate 5-dehydrogenase from Lactococcus lactis subsp. cremoris (strain SK11).